We begin with the raw amino-acid sequence, 224 residues long: Small ribosomal subunit protein uS3 (224 aa).

Positions 39–107 constitute a KH type-2 domain; that stretch reads IREFLKKKPS…DVWVEIAEVK (69 aa).

Belongs to the universal ribosomal protein uS3 family. Part of the 30S ribosomal subunit. Forms a tight complex with proteins S10 and S14.

Functionally, binds the lower part of the 30S subunit head. Binds mRNA in the 70S ribosome, positioning it for translation. The protein is Small ribosomal subunit protein uS3 of Chlamydia muridarum (strain MoPn / Nigg).